A 461-amino-acid chain; its full sequence is Early growth response factor homolog 1 (461 aa).

Disordered regions lie at residues methionine 1 to asparagine 25, threonine 96 to leucine 152, and aspartate 232 to leucine 308. Polar residues-rich tracts occupy residues threonine 96–tyrosine 105, glycine 129–lysine 144, leucine 249–serine 265, and glutamine 272–proline 291. Residues tyrosine 299–leucine 308 are compositionally biased toward low complexity. 3 C2H2-type zinc fingers span residues tyrosine 374 to histidine 398, phenylalanine 404 to histidine 426, and phenylalanine 432 to histidine 454.

The protein belongs to the EGR C2H2-type zinc-finger protein family. In terms of tissue distribution, expressed in sheath cells and distal tip cells of the somatic gonad, as well as in the intestine and sperm (at protein level). Expression not observed in oocytes (at protein level).

It is found in the nucleus. It localises to the cytoplasm. Its subcellular location is the perinuclear region. Sequence-specific DNA-binding transcription factor. Plays a role in oocyte development, acting cell-autonomously in the somatic gonad. Involved in negative regulation of oocyte MAPK activation and inhibits oocyte maturation and ovulation. The sequence is that of Early growth response factor homolog 1 from Caenorhabditis elegans.